A 613-amino-acid polypeptide reads, in one-letter code: MAAAAASPSPATPPRILLAGDANGRLHQLFKRVTSVNQSTGPFHALLCVGQFFSPDAGDGDGGGGGEVADYLEGRAAVPIPTYFTGDYGPAAPRLLAKAASSARGFSPGGIQICPNLFWLRGSARFTLHGLSVVYLSGRKGPGGPGCYSQDDVDALRALAEEPGIVDLFLTNEWPAGVVNGVDTSNAPSQISDPHGYDPVVAELVAEIKPRYHIAGSKGVFYAREPYVSDSAAHVTRFIGLANVGNKEKQKFIHAISPTPASTMSSVDIHARPPNTTLSPYISPAKSVPVEETPKRPAEDADLQYWRYDVKKQRHGEAGGNRLCFKFTSSGSCPRGSKCNYRHDEEAREHYNRNVCFDFLNKGKCEKGPECRFAHSLSDEGAVRDTKPRSERRRVESSCWFCLSSPDVESHLVISIGEGYYCALAKGPLVPNHVLVIPVEHCSSTLKMPVEAEAELGRYKDALAKYFEKQGKIAIYFEWVSQQSRHANLQAVPVPLSKASSVKKIFHLAAQRLGFEFSVVNPDGDANRARELLRSECDSKSSLFYVELPEGSVLLHLVDSNEKFPAQFGREVLAGLLSMADRADWRNCKVSKEEEIQMVDDFKQGFREFDPAE.

Positions Asn-275–Arg-296 are disordered. C3H1-type zinc fingers lie at residues Ala-318–Glu-346 and His-350–Ser-378.

The protein is Zinc finger CCCH domain-containing protein 59 of Oryza sativa subsp. japonica (Rice).